A 568-amino-acid chain; its full sequence is Potassium-transporting ATPase potassium-binding subunit (568 aa).

The next 10 membrane-spanning stretches (helical) occupy residues 7–27 (AEIAFILGLTVALGWPLGLFL), 65–85 (SYALALLAFSAASFILLYAIL), 135–155 (AGLTSHNFLSAAAGIAVAAAV), 177–197 (VSLYLLLPLSIVIALVFVALG), 254–274 (LTNLIEIVEMNVLGFACVVAF), 286–306 (ALITVMAIFVAVAASVIYWTE), 383–403 (GLYGMIVLALIAVFVAGLMVG), 422–442 (MLAVLILPLAILGFSAAAAVL), 489–509 (LGIAMLLGRFGYVIPVLAIAG), and 530–550 (LFIGLLIGVILILGGLQFFPA).

This sequence belongs to the KdpA family. The system is composed of three essential subunits: KdpA, KdpB and KdpC.

The protein localises to the cell inner membrane. In terms of biological role, part of the high-affinity ATP-driven potassium transport (or Kdp) system, which catalyzes the hydrolysis of ATP coupled with the electrogenic transport of potassium into the cytoplasm. This subunit binds the periplasmic potassium ions and delivers the ions to the membrane domain of KdpB through an intramembrane tunnel. This Beijerinckia indica subsp. indica (strain ATCC 9039 / DSM 1715 / NCIMB 8712) protein is Potassium-transporting ATPase potassium-binding subunit.